Here is a 227-residue protein sequence, read N- to C-terminus: Urease subunit gamma/beta (227 aa).

A urease gamma region spans residues 1-101 (MRLTPTERDR…LAVVADPVGG (101 aa)). Residues 102–227 (GGLGDDAPGA…AACGYLGADR (126 aa)) are urease beta.

It in the N-terminal section; belongs to the urease gamma subunit family. This sequence in the C-terminal section; belongs to the urease beta subunit family. In terms of assembly, heterohexamer of 3 UreC (alpha) and 3 UreAB (gamma/beta) subunits.

The protein localises to the cytoplasm. It carries out the reaction urea + 2 H2O + H(+) = hydrogencarbonate + 2 NH4(+). It participates in nitrogen metabolism; urea degradation; CO(2) and NH(3) from urea (urease route): step 1/1. This chain is Urease subunit gamma/beta, found in Streptomyces coelicolor (strain ATCC BAA-471 / A3(2) / M145).